A 98-amino-acid polypeptide reads, in one-letter code: NADH-ubiquinone oxidoreductase chain 4L (98 aa).

Helical transmembrane passes span 1-21 (MSLI…GLLM), 29-49 (ALLC…LTAL), and 59-79 (MPII…ALLV).

Belongs to the complex I subunit 4L family. In terms of assembly, core subunit of respiratory chain NADH dehydrogenase (Complex I) which is composed of 45 different subunits.

It is found in the mitochondrion inner membrane. The catalysed reaction is a ubiquinone + NADH + 5 H(+)(in) = a ubiquinol + NAD(+) + 4 H(+)(out). In terms of biological role, core subunit of the mitochondrial membrane respiratory chain NADH dehydrogenase (Complex I) which catalyzes electron transfer from NADH through the respiratory chain, using ubiquinone as an electron acceptor. Part of the enzyme membrane arm which is embedded in the lipid bilayer and involved in proton translocation. This is NADH-ubiquinone oxidoreductase chain 4L (MT-ND4L) from Hyperoodon ampullatus (Northern bottlenose whale).